The sequence spans 476 residues: Zinc finger CCCH domain-containing protein 6 (476 aa).

The segment covering 1 to 10 has biased composition (low complexity); that stretch reads MEQPHAAAAA. The segment at 1 to 57 is disordered; that stretch reads MEQPHAAAAAAGGGEGEGGASPDTGLEGPMWRMGLGGGGGGGGGGGGGDGDAAGRLP. Gly residues predominate over residues 34–51; it reads GLGGGGGGGGGGGGGDGD. C3H1-type zinc fingers lie at residues 59-87, 108-136, and 153-181; these read RPGEEDCVYYLRTGACGFGDRCRYNHPRD, RAGQPICEYYMKTGTCKFGTNCKYHHPKQ, and RLGEKECSYYMKTGQCKFGTTCKFHHPEF. The segment covering 290-301 has biased composition (polar residues); it reads SSTGQSSNNQQE. Positions 290 to 309 are disordered; sequence SSTGQSSNNQQEHGFPERPG. 2 consecutive C3H1-type zinc fingers follow at residues 307–335 and 353–381; these read RPGQPDCQYYMRTGDCKFGATCKYHHPRE and RPGAQPCAYYAQNGYCRYGVACKYDHPMG. The disordered stretch occupies residues 456–476; the sequence is TMMRAQTNTTSGGSSSPGGGR.

Its subcellular location is the nucleus. This Oryza sativa subsp. japonica (Rice) protein is Zinc finger CCCH domain-containing protein 6.